Consider the following 148-residue polypeptide: MEKTFLMIKPDGVGRGLIGEIVKRIENKGIKVVGAKLMTVSEDLAKTHYGEHSEKPFFGELVEFITSGPVFAMVLEGDNVVEIGRTLVGKTNPAESAPGTIRGDFGMTVGKNIIHGSDSVASADKEIALWFKEEEILSYDLVTSAWVY.

The ATP site is built by Lys-9, Phe-57, Arg-85, Thr-91, Arg-102, and Asn-112. His-115 functions as the Pros-phosphohistidine intermediate in the catalytic mechanism.

It belongs to the NDK family. In terms of assembly, homotetramer. Mg(2+) is required as a cofactor.

Its subcellular location is the cytoplasm. It catalyses the reaction a 2'-deoxyribonucleoside 5'-diphosphate + ATP = a 2'-deoxyribonucleoside 5'-triphosphate + ADP. It carries out the reaction a ribonucleoside 5'-diphosphate + ATP = a ribonucleoside 5'-triphosphate + ADP. Major role in the synthesis of nucleoside triphosphates other than ATP. The ATP gamma phosphate is transferred to the NDP beta phosphate via a ping-pong mechanism, using a phosphorylated active-site intermediate. The sequence is that of Nucleoside diphosphate kinase from Macrococcus caseolyticus (strain JCSC5402) (Macrococcoides caseolyticum).